We begin with the raw amino-acid sequence, 134 residues long: Phosphoribosyl-AMP cyclohydrolase (134 aa).

Asp-90 contributes to the Mg(2+) binding site. Cys-91 is a binding site for Zn(2+). Mg(2+)-binding residues include Asp-92 and Asp-94. Zn(2+)-binding residues include Cys-107 and Cys-114.

This sequence belongs to the PRA-CH family. As to quaternary structure, homodimer. Mg(2+) serves as cofactor. Zn(2+) is required as a cofactor.

Its subcellular location is the cytoplasm. It catalyses the reaction 1-(5-phospho-beta-D-ribosyl)-5'-AMP + H2O = 1-(5-phospho-beta-D-ribosyl)-5-[(5-phospho-beta-D-ribosylamino)methylideneamino]imidazole-4-carboxamide. It functions in the pathway amino-acid biosynthesis; L-histidine biosynthesis; L-histidine from 5-phospho-alpha-D-ribose 1-diphosphate: step 3/9. Its function is as follows. Catalyzes the hydrolysis of the adenine ring of phosphoribosyl-AMP. This is Phosphoribosyl-AMP cyclohydrolase from Arthrobacter sp. (strain FB24).